A 195-amino-acid polypeptide reads, in one-letter code: Nucleoside triphosphate pyrophosphatase (195 aa).

The Proton acceptor role is filled by Asp70.

It belongs to the Maf family. A divalent metal cation is required as a cofactor.

It localises to the cytoplasm. The catalysed reaction is a ribonucleoside 5'-triphosphate + H2O = a ribonucleoside 5'-phosphate + diphosphate + H(+). It catalyses the reaction a 2'-deoxyribonucleoside 5'-triphosphate + H2O = a 2'-deoxyribonucleoside 5'-phosphate + diphosphate + H(+). Functionally, nucleoside triphosphate pyrophosphatase. May have a dual role in cell division arrest and in preventing the incorporation of modified nucleotides into cellular nucleic acids. In Cyanothece sp. (strain PCC 7425 / ATCC 29141), this protein is Nucleoside triphosphate pyrophosphatase.